Here is a 356-residue protein sequence, read N- to C-terminus: Carbamoyl phosphate synthase small chain (356 aa).

The CPSase stretch occupies residues M1 to I160. S45, G211, and G213 together coordinate L-glutamine. The Glutamine amidotransferase type-1 domain maps to K163–R350. C238 acts as the Nucleophile in catalysis. Residues L239, Q242, N280, G282, and Y283 each contribute to the L-glutamine site. Catalysis depends on residues H323 and E325.

Belongs to the CarA family. In terms of assembly, composed of two chains; the small (or glutamine) chain promotes the hydrolysis of glutamine to ammonia, which is used by the large (or ammonia) chain to synthesize carbamoyl phosphate. Tetramer of heterodimers (alpha,beta)4.

It catalyses the reaction hydrogencarbonate + L-glutamine + 2 ATP + H2O = carbamoyl phosphate + L-glutamate + 2 ADP + phosphate + 2 H(+). It carries out the reaction L-glutamine + H2O = L-glutamate + NH4(+). Its pathway is amino-acid biosynthesis; L-arginine biosynthesis; carbamoyl phosphate from bicarbonate: step 1/1. It functions in the pathway pyrimidine metabolism; UMP biosynthesis via de novo pathway; (S)-dihydroorotate from bicarbonate: step 1/3. Its function is as follows. Small subunit of the glutamine-dependent carbamoyl phosphate synthetase (CPSase). CPSase catalyzes the formation of carbamoyl phosphate from the ammonia moiety of glutamine, carbonate, and phosphate donated by ATP, constituting the first step of 2 biosynthetic pathways, one leading to arginine and/or urea and the other to pyrimidine nucleotides. The small subunit (glutamine amidotransferase) binds and cleaves glutamine to supply the large subunit with the substrate ammonia. This Caldanaerobacter subterraneus subsp. tengcongensis (strain DSM 15242 / JCM 11007 / NBRC 100824 / MB4) (Thermoanaerobacter tengcongensis) protein is Carbamoyl phosphate synthase small chain.